Here is a 958-residue protein sequence, read N- to C-terminus: Coiled-coil domain-containing protein 33 (958 aa).

The C2 domain occupies 214–353; it reads SPEEPLIASQ…LVKPTESGKA (140 aa). The segment covering 602–617 has biased composition (polar residues); the sequence is SKDTVSSTMDLSTSTP. Residues 602–628 form a disordered region; sequence SKDTVSSTMDLSTSTPREAEEEPLVPE. 2 coiled-coil regions span residues 632 to 774 and 859 to 899; these read DTEM…LEDR and FNLL…RLQE. Residues 899-958 are disordered; the sequence is EQEKGFRHPSNSIIIEQPSALTHSMDLKQPSELEPLLPSSDSKLNKPLSPQKETANSQQT. Polar residues-rich tracts occupy residues 907-920 and 949-958; these read PSNS…SALT and QKETANSQQT.

This Homo sapiens (Human) protein is Coiled-coil domain-containing protein 33 (CCDC33).